The sequence spans 197 residues: MFIISQYREHRSLSILTQTCTIFRSMQVSSKHENLSVSFHLTPLQVLIITGTSSGIGLAAATMALEEGAKVLGVDISKPPDSLARHANYQFFQADLSHPEAPARVVEACSRTYGDRIDGLLNIAGVMDLNQSADSLSDNVWERCISINLTAPVKLMREVIPIMKLRGKGSIVNVASKAALSGAVSGVAYTASEHPWP.

4 residues coordinate NADP(+): Ile-49, Asp-95, Arg-157, and Tyr-189. Catalysis depends on Tyr-189, which acts as the Proton acceptor. Tyr-189 functions as the Proton donor in the catalytic mechanism.

The protein belongs to the short-chain dehydrogenases/reductases (SDR) family.

It functions in the pathway secondary metabolite biosynthesis; terpenoid biosynthesis. Functionally, short chain dehydrogenase; part of the gene cluster A that mediates the biosynthesis of austinol and dehydroaustinol, two fungal meroterpenoids. The first step of the pathway is the synthesis of 3,5-dimethylorsellinic acid by the polyketide synthase ausA. 3,5-dimethylorsellinic acid is then prenylated by the polyprenyl transferase ausN. Further epoxidation by the FAD-dependent monooxygenase ausM and cyclization by the probable terpene cyclase ausL lead to the formation of protoaustinoid A. Protoaustinoid A is then oxidized to spiro-lactone preaustinoid A3 by the combined action of the FAD-binding monooxygenases ausB and ausC, and the dioxygenase ausE. Acid-catalyzed keto-rearrangement and ring contraction of the tetraketide portion of preaustinoid A3 by ausJ lead to the formation of preaustinoid A4. The aldo-keto reductase ausK, with the help of ausH, is involved in the next step by transforming preaustinoid A4 into isoaustinone which is in turn hydroxylated by the P450 monooxygenase ausI to form austinolide. Finally, the cytochrome P450 monooxygenase ausG modifies austinolide to austinol. Austinol can be further modified to dehydroaustinol which forms a diffusible complex with diorcinol that initiates conidiation. Due to genetic rearrangements of the clusters and the subsequent loss of some enzymes, the end products of the Emericella nidulans austinoid biosynthesis clusters are austinol and dehydroaustinol, even if additional enzymes, such as the O-acetyltransferase ausQ and the cytochrome P450 monooxygenase ausR are still functional. This Emericella nidulans (strain FGSC A4 / ATCC 38163 / CBS 112.46 / NRRL 194 / M139) (Aspergillus nidulans) protein is Short chain dehydrogenase ausX.